The sequence spans 346 residues: Phosphoribosylformylglycinamidine cyclo-ligase (346 aa).

It belongs to the AIR synthase family.

The protein resides in the cytoplasm. The catalysed reaction is 2-formamido-N(1)-(5-O-phospho-beta-D-ribosyl)acetamidine + ATP = 5-amino-1-(5-phospho-beta-D-ribosyl)imidazole + ADP + phosphate + H(+). It participates in purine metabolism; IMP biosynthesis via de novo pathway; 5-amino-1-(5-phospho-D-ribosyl)imidazole from N(2)-formyl-N(1)-(5-phospho-D-ribosyl)glycinamide: step 2/2. The protein is Phosphoribosylformylglycinamidine cyclo-ligase of Shewanella halifaxensis (strain HAW-EB4).